The sequence spans 731 residues: Probable G-protein coupled receptor 149 (731 aa).

Residues 1 to 35 (MSLFLSNLSTNDSSLWKENHNSTDLLNPPGTLNIY) lie on the Extracellular side of the membrane. Residues N7, N11, and N21 are each glycosylated (N-linked (GlcNAc...) asparagine). A helical membrane pass occupies residues 36–56 (LFCLTCLMTFAALVGSIYSLI). Residues 57–69 (SLLKMQNRTVVSM) lie on the Cytoplasmic side of the membrane. The helical transmembrane segment at 70 to 90 (LVASWSVDDLMSVLSVTIFMF) threads the bilayer. At 91-109 (LQWPNEVPGYFQFLCTTSA) the chain is on the extracellular side. The cysteines at positions 105 and 182 are disulfide-linked. Residues 110–132 (LMYLCQGLSSNLKATLLVSYNFY) form a helical membrane-spanning segment. The Cytoplasmic portion of the chain corresponds to 133 to 155 (TMHRGVGSQTASRRSGQVLGVVL). A helical transmembrane segment spans residues 156-176 (TVWAASLLLSALPLCGWGAFV). The Extracellular portion of the chain corresponds to 177–189 (RTPWGCLVDCSSS). The helical transmembrane segment at 190–210 (YVLFLSIVYALAFGLLVGLSV) threads the bilayer. The Cytoplasmic portion of the chain corresponds to 211-310 (PLTHRLLCSE…SFTVSVAQKR (100 aa)). The segment at 234–271 (RGASIPGTPPTAGRVVSLSPEDAPGPSLRRSGGCSPSS) is disordered. A helical transmembrane segment spans residues 311–331 (FALILALTKVVLWLPMMMHMV). The Extracellular portion of the chain corresponds to 332–342 (VQNVVGFQSLP). A helical membrane pass occupies residues 343 to 363 (LETFSFLLTLLATTVTPVFVL). The Cytoplasmic portion of the chain corresponds to 364 to 731 (SKRWTHLPCG…RKREEESKGS (368 aa)). The disordered stretch occupies residues 475–526 (NTDITEAKQDSNNKKDAFSDKTGGDINYEETTFSEGPERRLSHEESQKPDLS). Composition is skewed to basic and acidic residues over residues 479 to 497 (TEAK…DKTG) and 510 to 526 (GPER…PDLS).

Belongs to the G-protein coupled receptor 1 family.

It localises to the cell membrane. Its function is as follows. Orphan receptor. The sequence is that of Probable G-protein coupled receptor 149 (GPR149) from Homo sapiens (Human).